The primary structure comprises 403 residues: F-box/kelch-repeat protein At5g39560 (403 aa).

Residues proline 26–arginine 72 enclose the F-box domain. Kelch repeat units follow at residues glutamate 138–glutamine 182, isoleucine 184–asparagine 229, asparagine 248–valine 294, and tyrosine 296–glycine 340.

In Arabidopsis thaliana (Mouse-ear cress), this protein is F-box/kelch-repeat protein At5g39560.